We begin with the raw amino-acid sequence, 120 residues long: NAD(P)H-quinone oxidoreductase subunit 3 (120 aa).

Helical transmembrane passes span 6 to 26 (GYDA…LALI), 64 to 84 (MFAL…PWAV), and 89 to 109 (LGVL…VALA).

This sequence belongs to the complex I subunit 3 family. NDH-1 can be composed of about 15 different subunits; different subcomplexes with different compositions have been identified which probably have different functions.

It localises to the cellular thylakoid membrane. It catalyses the reaction a plastoquinone + NADH + (n+1) H(+)(in) = a plastoquinol + NAD(+) + n H(+)(out). The catalysed reaction is a plastoquinone + NADPH + (n+1) H(+)(in) = a plastoquinol + NADP(+) + n H(+)(out). In terms of biological role, NDH-1 shuttles electrons from an unknown electron donor, via FMN and iron-sulfur (Fe-S) centers, to quinones in the respiratory and/or the photosynthetic chain. The immediate electron acceptor for the enzyme in this species is believed to be plastoquinone. Couples the redox reaction to proton translocation, and thus conserves the redox energy in a proton gradient. Cyanobacterial NDH-1 also plays a role in inorganic carbon-concentration. In Parasynechococcus marenigrum (strain WH8102), this protein is NAD(P)H-quinone oxidoreductase subunit 3.